Reading from the N-terminus, the 990-residue chain is Nucleotide-binding leucine-rich repeat (NLR)-like protein (990 aa).

The purine nucleoside phosphorylase domain stretch occupies residues 22–304; that stretch reads GWICAIPTEL…AVAAAYAKIL (283 aa). One can recognise an NB-ARC domain in the interval 334-563; that stretch reads REEHLRQVLT…TISNYLEVYE (230 aa). TPR repeat units follow at residues 732–765, 774–807, 816–849, 858–891, 900–933, and 942–975; these read RDLLHNIGEYYYRTGKYREAEEFYWRALELKKLA, IGSMNNLAVVYERHGEYAKAESLQRQTLELMKQV, LGSMNNLALVYEQQGEYAEAEKLQQQTLELRKQA, LMSMNNLATIYEQQGEYAKAESLQRQTLELKQQT, LASMNNLALVYEHQGEYAKAETLYQQTLKLRKQV, and LQSMNNLAIVYRLQGKYIEAEGLQQQQQSQATLD. The segment at 965 to 990 is disordered; sequence QQQQQSQATLDEGRLSKPARKRRKKK. A compositionally biased stretch (basic residues) spans 981–990; the sequence is KPARKRRKKK.

The catalysed reaction is ATP + H2O = D-ribose 5-triphosphate + adenine. The enzyme catalyses dATP + H2O = 2-deoxyribose 5-triphosphate + adenine. Functionally, the N-terminal purine nucleoside phosphorylase (PNP) domain cleaves the N-glycosidic bond of ATP, and to a lesser extent dATP; has very weak activity on adenosine and deoxyadenosine and no activity on (d)ADP or (d)AMP. This chain is Nucleotide-binding leucine-rich repeat (NLR)-like protein, found in Hyaloscypha variabilis (strain UAMH 11265 / GT02V1 / F) (Meliniomyces variabilis).